Reading from the N-terminus, the 780-residue chain is MTPEFDEEVVFENSPLYQYLQDLGHTDFEICSSSSPKPEKCLTTEGPQPPPTRVLQRQGILLKLTETIKSWTFSSQHSKKDDLLHKLDTGFRLDSLHTILQQEVLLQEDVELLELLDASILSAGQPQQESGHLPTLCSLATPNTWDVSLLFAFISLLIMFPTCWIVSSWLVWGIILFLYLIIRVLKLWRTAKLQMTLKKYRVRLEDMAANSRAFTNLVRKSLRLIQETEVISRGFTLVSAACSFNKAAQHPGQHLIGLRKAVYRTVRANFQAARLATLYMLKNYPLNSESDNVTNYICVVPFKELGLGLSEDQISEEEARNLTDGFSLPALKVLFQLWVAQSSEFFRRLALLLSTANSPSGPLLTAALLPHHILCDVTQGLPHAHSACLDELKRSYEFFRYFETQHQSVPQRLSKTPQKSRELSNVHTAVRSLQLHLKALLNEVIILEDELEKLVCTKETQELLSEAYPILEQKLKLIEPHVQASNSCWEEAISQVDKLLRRNTDKKGKPGVACENPHCTAEPLVRPALHIEDRDPIPEEQELEAYVDDIDIESEFRKDDFYHLSQEDRERQKREQEESRRVLQELKSVLGFKASEAERQKWKQLLFSDHAVLTSLSPVDPVESVSNSEPPMNSDTEKVNSNATEEETSKPCAGDKEDSRTEYVCDSPTEGPSKDTSADTGLLLPGAEETMCHQHESEAKSPQAAAAGATAPPTPRDTLQLSIKQRLARLQLPPEFTFSAGLAAEVAARSLSFTTMQEQTFGDEEEEQLVEGGENEVEEK.

The next 2 membrane-spanning stretches (helical) occupy residues 140-160 (ATPN…LIMF) and 162-182 (TCWI…YLII). Residues 430 to 467 (VRSLQLHLKALLNEVIILEDELEKLVCTKETQELLSEA) are a coiled coil. 2 disordered regions span residues 620–718 (DPVE…PRDT) and 757–780 (QEQT…VEEK). Residues 624 to 643 (SVSNSEPPMNSDTEKVNSNA) are compositionally biased toward polar residues. Basic and acidic residues-rich tracts occupy residues 647 to 663 (ETSK…RTEY) and 690 to 699 (TMCHQHESEA). The segment covering 702–711 (PQAAAAGATA) has biased composition (low complexity). The span at 761–780 (FGDEEEEQLVEGGENEVEEK) shows a compositional bias: acidic residues.

Belongs to the vezatin family. As to quaternary structure, interacts with USH2A (via the cytoplasmic region); the interaction associates VEZT with the USH2 complex at the stereocilia base. Interacts with myosin MYO7A and the cadherin-catenins complex. Expressed in developing cochlear hair cells. Isoform 1, isoform 2 and isoform 3 are expressed in testis. In the seminiferous epithelium, present exclusively in the acrosome of spermatids (at protein level).

Its subcellular location is the cell membrane. It is found in the cell projection. The protein localises to the stereocilium membrane. The protein resides in the cell junction. It localises to the adherens junction. Its subcellular location is the nucleus. It is found in the cytoplasmic vesicle. The protein localises to the secretory vesicle. The protein resides in the acrosome. Functionally, plays a pivotal role in the establishment of adherens junctions and their maintenance in adult life. Required for morphogenesis of the preimplantation embryo, and for the implantation process. In Mus musculus (Mouse), this protein is Vezatin.